A 574-amino-acid chain; its full sequence is Interactor of HORMAD1 protein 1 (574 aa).

Residues G113–T133 are disordered. Over residues Q117–D127 the composition is skewed to basic and acidic residues. Residues M217–F240 adopt a coiled-coil conformation. 3 disordered regions span residues G267 to D324, F372 to Q393, and T426 to Q457. Over residues S272–L284 the composition is skewed to low complexity. The span at F372–G381 shows a compositional bias: polar residues. Positions R431–R449 are enriched in basic residues. S476, S569, and S570 each carry phosphoserine.

As to quaternary structure, part of the MCD recombinosome complex, at least composed of IHO1, REC114 and MEI4. Interacts with REC114. Interacts with MEI4. Interacts with HORMAD1. Interacts with ANKRD31. In terms of tissue distribution, detected in spermatocytes and testis (at protein level).

The protein resides in the chromosome. Required for DNA double-strand breaks (DSBs) formation in unsynapsed regions during meiotic recombination. Probably acts by forming a complex with MEI4 and REC114, which activates DSBs formation in unsynapsed regions, an essential step to ensure completion of synapsis. Not required for HORMAD1 functions in pairing-independent synaptonemal complex formation, ATR recruitment to unsynapsed axes, meiotic silencing of unsynapsed chromatin (MSUC) or meiotic surveillance. The protein is Interactor of HORMAD1 protein 1 of Mus musculus (Mouse).